Consider the following 341-residue polypeptide: Pectate trisaccharide-lyase (341 aa).

Positions 1 to 27 are cleaved as a signal peptide; sequence MKKLISIIFIFVLGVVGSLTAAVSAEA. A propeptide spanning residues 28-39 is cleaved from the precursor; sequence ASALNSGKVNPL. PbH1 repeat units follow at residues 131 to 156 and 158 to 186; these read ANNI…GIEG and SKNI…FDVK. D150, D180, and D184 together coordinate Ca(2+). R233 is a catalytic residue. 2 PbH1 repeats span residues 262 to 283 and 287 to 322; these read GARI…VSWY and PGYW…SLDN.

It belongs to the polysaccharide lyase 1 family. Ca(2+) serves as cofactor.

Its subcellular location is the secreted. The enzyme catalyses eliminative cleavage of unsaturated trigalacturonate as the major product from the reducing end of polygalacturonic acid/pectate.. Cleaves unsaturated oligo-galacturonides from pectin. The major product is trigalacturonate; digalacturonate and tetragalacturonate are also produced. Activity on methylated pectins decreases with an increasing degree of methylation. This chain is Pectate trisaccharide-lyase, found in Bacillus licheniformis (strain ATCC 14580 / DSM 13 / JCM 2505 / CCUG 7422 / NBRC 12200 / NCIMB 9375 / NCTC 10341 / NRRL NRS-1264 / Gibson 46).